Consider the following 601-residue polypeptide: Sestrin homolog (601 aa).

Over residues 1–11 the composition is skewed to polar residues; that stretch reads MISMGMTSKGQ. The interval 1 to 58 is disordered; that stretch reads MISMGMTSKGQNVDGAPAGNSSSEWIISSSSSPFQANKRYSLDPPFGSDYSPPASPQN. Asparagine 20 is a glycosylation site (N-linked (GlcNAc...) asparagine). Residues 21 to 32 show a composition bias toward low complexity; that stretch reads SSSEWIISSSSS. 2 N-linked (GlcNAc...) asparagine glycosylation sites follow: asparagine 322 and asparagine 330. A disordered region spans residues 355 to 425; sequence RRSQQQDDDD…DSSSSTLSQS (71 aa). Residues 368–379 are compositionally biased toward basic and acidic residues; sequence LHDRQQDFHNAG. Positions 380–425 are enriched in low complexity; it reads DDSQSSNNNTTTTTTTTTTTTTTTNTNTTSNSAGGGDSSSSTLSQS. 5 N-linked (GlcNAc...) asparagine glycosylation sites follow: asparagine 387, asparagine 388, asparagine 406, asparagine 438, and asparagine 499.

Belongs to the sestrin family.

The protein resides in the nucleus. It localises to the cytoplasm. Functionally, may function as a negative feedback regulator of TOR function. The chain is Sestrin homolog from Dictyostelium discoideum (Social amoeba).